Consider the following 743-residue polypeptide: NAD(P)H-quinone oxidoreductase subunit 5, chloroplastic (743 aa).

16 helical membrane-spanning segments follow: residues 9–29 (WIIP…LLLF), 40–60 (WAFQ…NLSI), 89–109 (IDPL…MVLI), 125–145 (FAYM…SNLI), 147–167 (IYIF…FWFT), 185–205 (GDFG…SFEF), 224–244 (VFVT…SAQF), 258–278 (TPIS…FLVA), 284–304 (FIVI…TVFF), 327–347 (LGYM…FHLI), 354–374 (ALLF…VGYC), 396–416 (NSFL…CFWS), 425–445 (WLYS…TAFY), 551–571 (LFPI…GIPF), 607–627 (VFSV…YKPV), and 723–743 (YLFF…FLNL).

The protein belongs to the complex I subunit 5 family. NDH is composed of at least 16 different subunits, 5 of which are encoded in the nucleus.

The protein resides in the plastid. It localises to the chloroplast thylakoid membrane. It carries out the reaction a plastoquinone + NADH + (n+1) H(+)(in) = a plastoquinol + NAD(+) + n H(+)(out). The catalysed reaction is a plastoquinone + NADPH + (n+1) H(+)(in) = a plastoquinol + NADP(+) + n H(+)(out). NDH shuttles electrons from NAD(P)H:plastoquinone, via FMN and iron-sulfur (Fe-S) centers, to quinones in the photosynthetic chain and possibly in a chloroplast respiratory chain. The immediate electron acceptor for the enzyme in this species is believed to be plastoquinone. Couples the redox reaction to proton translocation, and thus conserves the redox energy in a proton gradient. This Helianthus annuus (Common sunflower) protein is NAD(P)H-quinone oxidoreductase subunit 5, chloroplastic (ndhF).